Here is a 144-residue protein sequence, read N- to C-terminus: Mediator of RNA polymerase II transcription subunit 9 (144 aa).

Residues 85-143 (QDCNHKIFELQKRFESAREQIRQLPGIDFNKEEQQQRLELLRNQLKLKQQLIRKYKDTE) adopt a coiled-coil conformation.

Belongs to the Mediator complex subunit 9 family. Component of the Mediator complex.

Its subcellular location is the nucleus. Functionally, component of the Mediator complex, a coactivator involved in the regulated transcription of nearly all RNA polymerase II-dependent genes. Mediator functions as a bridge to convey information from gene-specific regulatory proteins to the basal RNA polymerase II transcription machinery. Mediator is recruited to promoters by direct interactions with regulatory proteins and serves as a scaffold for the assembly of a functional preinitiation complex with RNA polymerase II and the general transcription factors. The sequence is that of Mediator of RNA polymerase II transcription subunit 9 (MED9) from Drosophila melanogaster (Fruit fly).